A 150-amino-acid chain; its full sequence is Transmembrane protein PMIS2 (150 aa).

The span at 1–12 (MALKPPSATQPA) shows a compositional bias: low complexity. Residues 1-61 (MALKPPSATQ…EPQEPTQTPE (61 aa)) form a disordered region. The segment covering 13–22 (PNAPATPDAP) has biased composition (pro residues). Residues 23–61 (PTTGDPGASAAPGSPTTTGGPGAPAEVPQEPQEPTQTPE) show a composition bias toward low complexity. 2 helical membrane-spanning segments follow: residues 71-91 (LCLT…ALYF) and 130-150 (GWFG…LVLY).

It belongs to the CD225/Dispanin family.

It localises to the membrane. Its function is as follows. May play a role in spermatozoa mobility. In Homo sapiens (Human), this protein is Transmembrane protein PMIS2.